Here is a 100-residue protein sequence, read N- to C-terminus: Urease subunit gamma (100 aa).

This sequence belongs to the urease gamma subunit family. Heterotrimer of UreA (gamma), UreB (beta) and UreC (alpha) subunits. Three heterotrimers associate to form the active enzyme.

Its subcellular location is the cytoplasm. The enzyme catalyses urea + 2 H2O + H(+) = hydrogencarbonate + 2 NH4(+). Its pathway is nitrogen metabolism; urea degradation; CO(2) and NH(3) from urea (urease route): step 1/1. This chain is Urease subunit gamma, found in Burkholderia thailandensis (strain ATCC 700388 / DSM 13276 / CCUG 48851 / CIP 106301 / E264).